The chain runs to 100 residues: Small ribosomal subunit protein uS14 (100 aa).

This sequence belongs to the universal ribosomal protein uS14 family. In terms of assembly, part of the 30S ribosomal subunit. Contacts proteins S3 and S10.

In terms of biological role, binds 16S rRNA, required for the assembly of 30S particles and may also be responsible for determining the conformation of the 16S rRNA at the A site. The sequence is that of Small ribosomal subunit protein uS14 from Prochlorococcus marinus subsp. pastoris (strain CCMP1986 / NIES-2087 / MED4).